A 175-amino-acid chain; its full sequence is Transcription factor E (175 aa).

Positions 8-90 (NDPVIQKYLH…LWTFQYENIP (83 aa)) constitute an HTH TFE/IIEalpha-type domain.

Belongs to the TFE family. As to quaternary structure, monomer. Interaction with RNA polymerase subunits RpoF and RpoE is necessary for Tfe stimulatory transcription activity. Able to interact with Tbp and RNA polymerase in the absence of DNA promoter. Interacts both with the preinitiation and elongation complexes.

Transcription factor that plays a role in the activation of archaeal genes transcribed by RNA polymerase. Facilitates transcription initiation by enhancing TATA-box recognition by TATA-box-binding protein (Tbp), and transcription factor B (Tfb) and RNA polymerase recruitment. Not absolutely required for transcription in vitro, but particularly important in cases where Tbp or Tfb function is not optimal. It dynamically alters the nucleic acid-binding properties of RNA polymerases by stabilizing the initiation complex and destabilizing elongation complexes. Seems to translocate with the RNA polymerase following initiation and acts by binding to the non template strand of the transcription bubble in elongation complexes. The chain is Transcription factor E from Natronomonas pharaonis (strain ATCC 35678 / DSM 2160 / CIP 103997 / JCM 8858 / NBRC 14720 / NCIMB 2260 / Gabara) (Halobacterium pharaonis).